Consider the following 537-residue polypeptide: Zinc finger protein 835 (537 aa).

Positions 12–109 (AELEGNWKHE…RERGGGPKKP (98 aa)) are disordered. Residues 63–77 (TISSPAATQASVPDD) show a composition bias toward polar residues. Residues 89–104 (SPKERHPDSRQRERGG) are compositionally biased toward basic and acidic residues. 14 C2H2-type zinc fingers span residues 110 to 132 (WKCG…QRIH), 138 to 160 (FACP…QRTH), 166 to 188 (YACH…WRTH), 194 to 216 (HRCA…RRVH), 222 to 244 (YACA…QRIH), 250 to 272 (YECS…QRIH), 278 to 300 (YRCG…RRVH), 306 to 328 (YTCQ…RRIH), 334 to 356 (YACG…QRTH), 362 to 384 (YPCH…RLVH), 390 to 412 (YRCL…QKIH), 418 to 440 (YKCG…QRTH), 446 to 468 (YTCP…HIVH), and 474 to 496 (YECS…QRTH). A disordered region spans residues 497 to 537 (ADSSGRLCPAPTPDSTPGLSQGGETCQQGCPGRNPRGPAED). Polar residues predominate over residues 509–524 (PDSTPGLSQGGETCQQ).

This sequence belongs to the krueppel C2H2-type zinc-finger protein family.

It is found in the nucleus. Functionally, may be involved in transcriptional regulation. The chain is Zinc finger protein 835 (ZNF835) from Homo sapiens (Human).